A 287-amino-acid chain; its full sequence is Aspartate dehydrogenase domain-containing protein (287 aa).

Residues Ser24 and Ser172 each carry the phosphoserine modification.

This sequence belongs to the L-aspartate dehydrogenase family.

In Mus musculus (Mouse), this protein is Aspartate dehydrogenase domain-containing protein.